The chain runs to 75 residues: Guanine nucleotide-binding protein G(I)/G(S)/G(O) subunit gamma-4 (75 aa).

Cysteine 72 carries the post-translational modification Cysteine methyl ester. Cysteine 72 is lipidated: S-geranylgeranyl cysteine. Residues 73-75 (TIL) constitute a propeptide, removed in mature form.

This sequence belongs to the G protein gamma family. G proteins are composed of 3 units, alpha, beta and gamma. Interacts with beta-1 and beta-2, but not with beta-3. Interacts with KCNK1. Interacts (via C-terminus) with KCNK2/TREK-1 (via N-terminus); this interaction confers ion selectivity to Cl(-) and L-glutamate. As to expression, brain.

The protein localises to the cell membrane. Guanine nucleotide-binding proteins (G proteins) are involved as a modulator or transducer in various transmembrane signaling systems. The beta and gamma chains are required for the GTPase activity, for replacement of GDP by GTP, and for G protein-effector interaction. This Mus musculus (Mouse) protein is Guanine nucleotide-binding protein G(I)/G(S)/G(O) subunit gamma-4 (Gng4).